Here is a 78-residue protein sequence, read N- to C-terminus: Large ribosomal subunit protein bL28 (78 aa).

The protein belongs to the bacterial ribosomal protein bL28 family.

This is Large ribosomal subunit protein bL28 from Thiobacillus denitrificans (strain ATCC 25259 / T1).